Consider the following 400-residue polypeptide: MGGWSSKPRKGMGTNLSVPNPLGFFPDHQLDPAFGANSNNPDWDFNPIKDHWPAANQVGVGAFGPGFTPPHGGILGWSPQAQGILTTVSTIPPPASTNRQSGRQPTPISPPLRDSHPQAMQWNSTAFHQTLQDPRVRGLYLPAGGSSSGTVNPAPNIASHISSISARTGDPVTNMENITSGFLGPLLVLQAGFFLLTRILTIPQSLDSWWTSLNFLGGSPVCLGQNSQSPTSNHSPTSCPPICPGYRWMCLRRFIIFLFILLLCLIFLLVLLDYQGMLPVCPLIPGSTTTSTGPCKTCTTPAQGNSMFPSCCCTKPTDGNCTCIPIPSSWAFAKFLWEWASVRFSWLSLLVPFVQWFVGLSPTVWLSAIWMMWYWGPSLYSIVRPFIPLLPIFFCLWVYI.

Residue methionine 1 is modified to N-acetylmethionine. Disordered stretches follow at residues 1 to 20 (MGGW…SVPN) and 88 to 115 (VSTI…LRDS). Residue glycine 2 is the site of N-myristoyl glycine; by host attachment. The pre-S1 stretch occupies residues 2–119 (GGWSSKPRKG…PPLRDSHPQA (118 aa)). Positions 2-174 (GGWSSKPRKG…SARTGDPVTN (173 aa)) are pre-S. The Virion surface; in external conformation segment spans residues 2–181 (GGWSSKPRKG…VTNMENITSG (180 aa)). At 2–253 (GGWSSKPRKG…PGYRWMCLRR (252 aa)) the chain is on the intravirion; in internal conformation side. Tryptophan 4 carries N-linked (GlcNAc...) asparagine glycosylation. Polar residues predominate over residues 88 to 106 (VSTIPPPASTNRQSGRQPT). The tract at residues 120 to 174 (MQWNSTAFHQTLQDPRVRGLYLPAGGSSSGTVNPAPNIASHISSISARTGDPVTN) is pre-S2. The helical transmembrane segment at 182–202 (FLGPLLVLQAGFFLLTRILTI) threads the bilayer. Residues 203-253 (PQSLDSWWTSLNFLGGSPVCLGQNSQSPTSNHSPTSCPPICPGYRWMCLRR) lie on the Intravirion; in external conformation side of the membrane. The chain crosses the membrane as a helical span at residues 254–274 (FIIFLFILLLCLIFLLVLLDY). Residues 275–348 (QGMLPVCPLI…WASVRFSWLS (74 aa)) lie on the Virion surface side of the membrane. The N-linked (GlcNAc...) asparagine; by host glycan is linked to asparagine 320. The helical transmembrane segment at 349–369 (LLVPFVQWFVGLSPTVWLSAI) threads the bilayer. Over 370 to 375 (WMMWYW) the chain is Intravirion. A helical transmembrane segment spans residues 376-398 (GPSLYSIVRPFIPLLPIFFCLWV). Residues 399–400 (YI) lie on the Virion surface side of the membrane.

This sequence belongs to the orthohepadnavirus major surface antigen family. As to quaternary structure, in its internal form (Li-HBsAg), interacts with the capsid protein and with the isoform S. Interacts with host chaperone CANX. Associates with host chaperone CANX through its pre-S2 N glycan; this association may be essential for isoform M proper secretion. In terms of assembly, interacts with isoform L. Interacts with the antigens of satellite virus HDV (HDVAgs); this interaction is required for encapsidation of HDV genomic RNA. Post-translationally, isoform M is N-terminally acetylated by host at a ratio of 90%, and N-glycosylated by host at the pre-S2 region. In terms of processing, myristoylated.

The protein localises to the virion membrane. Its function is as follows. The large envelope protein exists in two topological conformations, one which is termed 'external' or Le-HBsAg and the other 'internal' or Li-HBsAg. In its external conformation the protein attaches the virus to cell receptors and thereby initiating infection. This interaction determines the species specificity and liver tropism. This attachment induces virion internalization predominantly through caveolin-mediated endocytosis. The large envelope protein also assures fusion between virion membrane and endosomal membrane. In its internal conformation the protein plays a role in virion morphogenesis and mediates the contact with the nucleocapsid like a matrix protein. The middle envelope protein plays an important role in the budding of the virion. It is involved in the induction of budding in a nucleocapsid independent way. In this process the majority of envelope proteins bud to form subviral lipoprotein particles of 22 nm of diameter that do not contain a nucleocapsid. In Homo sapiens (Human), this protein is Large envelope protein.